Here is a 619-residue protein sequence, read N- to C-terminus: Chaperone protein HscA homolog (619 aa).

The protein belongs to the heat shock protein 70 family.

Its function is as follows. Chaperone involved in the maturation of iron-sulfur cluster-containing proteins. Has a low intrinsic ATPase activity which is markedly stimulated by HscB. This is Chaperone protein HscA homolog from Acinetobacter baumannii (strain AB0057).